The primary structure comprises 123 residues: Large ribosomal subunit protein bL12 (123 aa).

The protein belongs to the bacterial ribosomal protein bL12 family. In terms of assembly, homodimer. Part of the ribosomal stalk of the 50S ribosomal subunit. Forms a multimeric L10(L12)X complex, where L10 forms an elongated spine to which 2 to 4 L12 dimers bind in a sequential fashion. Binds GTP-bound translation factors.

Functionally, forms part of the ribosomal stalk which helps the ribosome interact with GTP-bound translation factors. Is thus essential for accurate translation. This is Large ribosomal subunit protein bL12 from Desulfotalea psychrophila (strain LSv54 / DSM 12343).